The sequence spans 262 residues: ATP synthase subunit a (262 aa).

A run of 5 helical transmembrane segments spans residues 24 to 44 (AVHL…LVVF), 85 to 105 (IAPL…IDLV), 129 to 149 (DISA…FYTV), 194 to 214 (LFGN…MYMA), and 228 to 248 (LVWA…FMML).

This sequence belongs to the ATPase A chain family. In terms of assembly, F-type ATPases have 2 components, CF(1) - the catalytic core - and CF(0) - the membrane proton channel. CF(1) has five subunits: alpha(3), beta(3), gamma(1), delta(1), epsilon(1). CF(0) has three main subunits: a(1), b(2) and c(9-12). The alpha and beta chains form an alternating ring which encloses part of the gamma chain. CF(1) is attached to CF(0) by a central stalk formed by the gamma and epsilon chains, while a peripheral stalk is formed by the delta and b chains.

It localises to the cell inner membrane. Functionally, key component of the proton channel; it plays a direct role in the translocation of protons across the membrane. The chain is ATP synthase subunit a from Haemophilus ducreyi (strain 35000HP / ATCC 700724).